Reading from the N-terminus, the 977-residue chain is Phosphatidylinositol 4-kinase PIK1alpha (977 aa).

In terms of domain architecture, PIK helical spans 1 to 125 (MSADITETPN…QAVRNLITKI (125 aa)). The segment at 205–261 (MSADIPKGSHSDDETATSSSIKPSLSRSASVPRRNTKKTSLSFSSDESEAYTTDDDD) is disordered. Polar residues predominate over residues 220-233 (ATSSSIKPSLSRSA). Residues 250 to 261 (DESEAYTTDDDD) are compositionally biased toward acidic residues. Residues 679–960 (EDWNTKKQRI…FLIGKSLGSM (282 aa)) enclose the PI3K/PI4K catalytic domain. A G-loop region spans residues 685–691 (KQRIKKS). The tract at residues 826 to 834 (QIKDRHNGN) is catalytic loop. Positions 845-869 (HIDFGFLLSNSPGSVGFEAAPFKLT) are activation loop.

It belongs to the PI3/PI4-kinase family. Type III PI4K subfamily.

It localises to the nucleus. It catalyses the reaction a 1,2-diacyl-sn-glycero-3-phospho-(1D-myo-inositol) + ATP = a 1,2-diacyl-sn-glycero-3-phospho-(1D-myo-inositol 4-phosphate) + ADP + H(+). In terms of biological role, acts on phosphatidylinositol (PI) in the first committed step in the production of the second messenger inositol 1,4,5,-trisphosphate. This is Phosphatidylinositol 4-kinase PIK1alpha (PIKALPHA) from Candida albicans (strain SC5314 / ATCC MYA-2876) (Yeast).